The primary structure comprises 282 residues: Putative phosphatase in upp 3'region (282 aa).

Residue aspartate 17 is the Nucleophile of the active site. Aspartate 17 contacts Mg(2+). Phosphate is bound at residue leucine 18. Residue aspartate 19 participates in Mg(2+) binding. Residues 53–54 (TG) and lysine 211 contribute to the phosphate site. Residues aspartate 234 and serine 235 each contribute to the Mg(2+) site. Asparagine 237 lines the phosphate pocket.

The protein belongs to the HAD-like hydrolase superfamily. Cof family. The cofactor is Mg(2+).

In Metamycoplasma hominis (Mycoplasma hominis), this protein is Putative phosphatase in upp 3'region.